The chain runs to 1001 residues: UPF0182 protein Mjls_1469 (1001 aa).

The next 7 membrane-spanning stretches (helical) occupy residues Val16 to Asp36, Val61 to Leu81, Leu112 to Tyr132, Phe174 to Ile194, Ile209 to Asp229, Lys258 to Leu278, and Ile286 to Val306. A compositionally biased stretch (low complexity) spans Ala900–Gly929. A disordered region spans residues Ala900 to Ser977.

Belongs to the UPF0182 family.

The protein resides in the cell membrane. This Mycobacterium sp. (strain JLS) protein is UPF0182 protein Mjls_1469.